The following is a 405-amino-acid chain: Glucose-1-phosphate adenylyltransferase (405 aa).

Alpha-D-glucose 1-phosphate is bound by residues Y96, G161, 176–177, and S194; that span reads EK.

The protein belongs to the bacterial/plant glucose-1-phosphate adenylyltransferase family. Homotetramer.

The catalysed reaction is alpha-D-glucose 1-phosphate + ATP + H(+) = ADP-alpha-D-glucose + diphosphate. Its pathway is glycan biosynthesis; glycogen biosynthesis. In terms of biological role, involved in the biosynthesis of ADP-glucose, a building block required for the elongation reactions to produce glycogen. Catalyzes the reaction between ATP and alpha-D-glucose 1-phosphate (G1P) to produce pyrophosphate and ADP-Glc. The polypeptide is Glucose-1-phosphate adenylyltransferase (Photobacterium profundum (strain SS9)).